The sequence spans 335 residues: Glucokinase (335 aa).

11–16 (ADIGGT) lines the ATP pocket.

The protein belongs to the bacterial glucokinase family.

The protein resides in the cytoplasm. It catalyses the reaction D-glucose + ATP = D-glucose 6-phosphate + ADP + H(+). This is Glucokinase from Xanthomonas oryzae pv. oryzae (strain MAFF 311018).